The primary structure comprises 502 residues: ATP synthase subunit alpha (502 aa).

ATP is bound at residue 169-176; sequence GDRQTGKT.

The protein belongs to the ATPase alpha/beta chains family. In terms of assembly, F-type ATPases have 2 components, CF(1) - the catalytic core - and CF(0) - the membrane proton channel. CF(1) has five subunits: alpha(3), beta(3), gamma(1), delta(1), epsilon(1). CF(0) has three main subunits: a(1), b(2) and c(9-12). The alpha and beta chains form an alternating ring which encloses part of the gamma chain. CF(1) is attached to CF(0) by a central stalk formed by the gamma and epsilon chains, while a peripheral stalk is formed by the delta and b chains.

The protein localises to the cell membrane. The enzyme catalyses ATP + H2O + 4 H(+)(in) = ADP + phosphate + 5 H(+)(out). Its function is as follows. Produces ATP from ADP in the presence of a proton gradient across the membrane. The alpha chain is a regulatory subunit. The sequence is that of ATP synthase subunit alpha from Clostridium perfringens (strain ATCC 13124 / DSM 756 / JCM 1290 / NCIMB 6125 / NCTC 8237 / Type A).